The primary structure comprises 369 residues: Glutamate 5-kinase (369 aa).

Lys9 serves as a coordination point for ATP. Positions 49, 136, and 148 each coordinate substrate. ATP-binding positions include 168-169 and 210-216; these read TD and TGGMLTK. The PUA domain maps to 275–355; that stretch reads QGSIWVDKGA…KGVLIYRDDW (81 aa).

Belongs to the glutamate 5-kinase family.

The protein resides in the cytoplasm. The enzyme catalyses L-glutamate + ATP = L-glutamyl 5-phosphate + ADP. Its pathway is amino-acid biosynthesis; L-proline biosynthesis; L-glutamate 5-semialdehyde from L-glutamate: step 1/2. Catalyzes the transfer of a phosphate group to glutamate to form L-glutamate 5-phosphate. The protein is Glutamate 5-kinase of Streptococcus pneumoniae (strain ATCC 700669 / Spain 23F-1).